Here is a 350-residue protein sequence, read N- to C-terminus: Probable dTDP-glucose 4,6-dehydratase (350 aa).

7–13 (GGAGFIG) contacts NAD(+). Residue Thr132 participates in substrate binding. Asp133 acts as the Proton donor in catalysis. Residues Glu134 and Tyr157 each act as proton acceptor in the active site.

This sequence belongs to the NAD(P)-dependent epimerase/dehydratase family. dTDP-glucose dehydratase subfamily. The cofactor is NAD(+).

It catalyses the reaction dTDP-alpha-D-glucose = dTDP-4-dehydro-6-deoxy-alpha-D-glucose + H2O. The protein operates within carbohydrate biosynthesis; dTDP-L-rhamnose biosynthesis. The protein is Probable dTDP-glucose 4,6-dehydratase of Sinorhizobium fredii (strain NBRC 101917 / NGR234).